We begin with the raw amino-acid sequence, 338 residues long: P2Y purinoceptor 14 (338 aa).

The Extracellular portion of the chain corresponds to 1 to 29; the sequence is MINSTSTQPPDESCSQNLLITQQIIPVLY. The N-linked (GlcNAc...) asparagine glycan is linked to Asn3. Residues 30 to 50 traverse the membrane as a helical segment; it reads CMVFIAGILLNGVSGWIFFYV. The Cytoplasmic portion of the chain corresponds to 51 to 55; that stretch reads PSSKS. The chain crosses the membrane as a helical span at residues 56 to 76; the sequence is FIIYLKNIVIADFVMSLTFPF. The Extracellular portion of the chain corresponds to 77 to 96; the sequence is KILGDSGLGPWQLNVFVCRV. A disulfide bridge links Cys94 with Cys172. A helical transmembrane segment spans residues 97–117; the sequence is SAVLFYVNMYVSIVFFGLISF. At 118–139 the chain is on the cytoplasmic side; sequence DRYYKIVKPLWTSFIQSVSYSK. A helical transmembrane segment spans residues 140–160; that stretch reads LLSVIVWMLMLLLAVPNIILT. Asn161 carries N-linked (GlcNAc...) asparagine glycosylation. At 161–188 the chain is on the extracellular side; it reads NQSVREVTQIKCIELKSELGRKWHKASN. The helical transmembrane segment at 189–209 threads the bilayer; the sequence is YIFVAIFWIVFLLLIVFYTAI. The Cytoplasmic segment spans residues 210–234; sequence TKKIFKSHLKSSRNSTSVKKKSSRN. The chain crosses the membrane as a helical span at residues 235-255; that stretch reads IFSIVFVFFVCFVPYHIARIP. Topologically, residues 256–278 are extracellular; sequence YTKSQTEAHYSCQSKEILRYMKE. The chain crosses the membrane as a helical span at residues 279–299; that stretch reads FTLLLSAANVCLDPIIYFFLC. Topologically, residues 300 to 338 are cytoplasmic; the sequence is QPFREILCKKLHIPLKAQNDLDISRIKRGNTTLESTDTL.

It belongs to the G-protein coupled receptor 1 family. Highest expression in the placenta, adipose tissue, stomach and intestine, intermediate levels in the brain, spleen, lung and heart, lowest levels in the kidney.

It localises to the cell membrane. Its function is as follows. Receptor for UDP-glucose and other UDP-sugar coupled to G-proteins. Not activated by ATP, ADP, UTP or ATP. This Homo sapiens (Human) protein is P2Y purinoceptor 14 (P2RY14).